The following is a 162-amino-acid chain: Interleukin-15 (162 aa).

The first 29 residues, 1 to 29 (MRILKPYLRSTSIQCYLCLLLNSHFLTEA), serve as a signal peptide directing secretion. Residues 30 to 48 (CIPVFILSCINAGLPKTEA) constitute a propeptide that is removed on maturation. Intrachain disulfides connect cysteine 83–cysteine 133 and cysteine 90–cysteine 136. N-linked (GlcNAc...) asparagine glycans are attached at residues asparagine 104 and asparagine 127.

This sequence belongs to the IL-15/IL-21 family.

It is found in the secreted. Its function is as follows. Cytokine that plays a major role in the development of inflammatory and protective immune responses to microbial invaders and parasites by modulating immune cells of both the innate and adaptive immune systems. Stimulates the proliferation of natural killer cells, T-cells and B-cells and promotes the secretion of several cytokines. In monocytes, induces the production of IL8 and monocyte chemotactic protein 1/CCL2, two chemokines that attract neutrophils and monocytes respectively to sites of infection. Unlike most cytokines, which are secreted in soluble form, IL15 is expressed in association with its high affinity IL15RA on the surface of IL15-producing cells and delivers signals to target cells that express IL2RB and IL2RG receptor subunits. Binding to its receptor triggers the phosphorylation of JAK1 and JAK3 and the recruitment and subsequent phosphorylation of signal transducer and activator of transcription-3/STAT3 and STAT5. In mast cells, induces the rapid tyrosine phosphorylation of STAT6 and thereby controls mast cell survival and release of cytokines such as IL4. This chain is Interleukin-15 (IL15), found in Felis catus (Cat).